Here is a 430-residue protein sequence, read N- to C-terminus: Oleandomycin glycosyltransferase (430 aa).

The interval 385–430 (GGTRRAADLIEAELPARHERQEPVGDRPNVGDRPAGVRSDRQRSAL) is disordered. Positions 386 to 409 (GTRRAADLIEAELPARHERQEPVG) are enriched in basic and acidic residues.

This sequence belongs to the UDP-glycosyltransferase family.

Functionally, specifically inactivates oleandomycin via 2'-O-glycosylation using UDP-glucose. This is Oleandomycin glycosyltransferase (oleD) from Streptomyces antibioticus.